The sequence spans 139 residues: Large-conductance mechanosensitive channel (139 aa).

The next 2 membrane-spanning stretches (helical) occupy residues 9–29 (AFAV…GAAF) and 79–99 (IQSV…VKAI).

It belongs to the MscL family. In terms of assembly, homopentamer.

The protein localises to the cell inner membrane. Functionally, channel that opens in response to stretch forces in the membrane lipid bilayer. May participate in the regulation of osmotic pressure changes within the cell. The protein is Large-conductance mechanosensitive channel of Pseudomonas fluorescens (strain SBW25).